We begin with the raw amino-acid sequence, 88 residues long: Small ribosomal subunit protein uS17 (88 aa).

Belongs to the universal ribosomal protein uS17 family. As to quaternary structure, part of the 30S ribosomal subunit.

In terms of biological role, one of the primary rRNA binding proteins, it binds specifically to the 5'-end of 16S ribosomal RNA. This chain is Small ribosomal subunit protein uS17, found in Xylella fastidiosa (strain M23).